Here is a 226-residue protein sequence, read N- to C-terminus: Ribonuclease 3 (226 aa).

Residues isoleucine 6–aspartate 128 enclose the RNase III domain. Glutamate 41 contributes to the Mg(2+) binding site. Residue aspartate 45 is part of the active site. Positions 114 and 117 each coordinate Mg(2+). Glutamate 117 is an active-site residue. The DRBM domain occupies aspartate 155–leucine 225.

Belongs to the ribonuclease III family. As to quaternary structure, homodimer. Requires Mg(2+) as cofactor.

Its subcellular location is the cytoplasm. The enzyme catalyses Endonucleolytic cleavage to 5'-phosphomonoester.. In terms of biological role, digests double-stranded RNA. Involved in the processing of primary rRNA transcript to yield the immediate precursors to the large and small rRNAs (23S and 16S). Processes some mRNAs, and tRNAs when they are encoded in the rRNA operon. Processes pre-crRNA and tracrRNA of type II CRISPR loci if present in the organism. This chain is Ribonuclease 3, found in Klebsiella pneumoniae (strain 342).